We begin with the raw amino-acid sequence, 245 residues long: CTD nuclear envelope phosphatase 1B (245 aa).

Residues 7–29 form a helical membrane-spanning segment; sequence CLLGVRTFHGVTSRIWSFFLYIL. One can recognise an FCP1 homology domain in the interval 58–225; the sequence is NNVKRKILVL…LNLLPMLDAL (168 aa).

The protein belongs to the dullard family.

The protein localises to the endoplasmic reticulum membrane. The protein resides in the nucleus membrane. It carries out the reaction O-phospho-L-seryl-[protein] + H2O = L-seryl-[protein] + phosphate. The enzyme catalyses O-phospho-L-threonyl-[protein] + H2O = L-threonyl-[protein] + phosphate. Functionally, serine/threonine protein phosphatase that may dephosphorylate and activate lipins. Lipins are phosphatidate phosphatases that catalyze the conversion of phosphatidic acid to diacylglycerol and control the metabolism of fatty acids at different levels. May indirectly modulate the lipid composition of nuclear and/or endoplasmic reticulum membranes and be required for proper nuclear membrane morphology and/or dynamics. May also indirectly regulate the production of lipid droplets and triacylglycerol. May antagonize BMP signaling. In Danio rerio (Zebrafish), this protein is CTD nuclear envelope phosphatase 1B (ctdnep1b).